Here is a 108-residue protein sequence, read N- to C-terminus: Probable endonuclease 4 (108 aa).

Residues H2, H36, D49, H51, and E81 each contribute to the Zn(2+) site.

It belongs to the AP endonuclease 2 family. Requires Zn(2+) as cofactor.

It catalyses the reaction Endonucleolytic cleavage to 5'-phosphooligonucleotide end-products.. In terms of biological role, endonuclease IV plays a role in DNA repair. It cleaves phosphodiester bonds at apurinic or apyrimidinic (AP) sites, generating a 3'-hydroxyl group and a 5'-terminal sugar phosphate. This Thermotoga neapolitana protein is Probable endonuclease 4 (nfo).